Here is a 160-residue protein sequence, read N- to C-terminus: uncharacterized protein (160 aa).

An N-acetyltransferase domain is found at 7 to 151 (LLINFKTLEE…NPYIWHPDMD (145 aa)).

This is an uncharacterized protein from Bacillus velezensis (strain DSM 23117 / BGSC 10A6 / LMG 26770 / FZB42) (Bacillus amyloliquefaciens subsp. plantarum).